Here is a 141-residue protein sequence, read N- to C-terminus: MTMNQTVLGFDYGTKSIGVAVGQSITASASPLLALKAQDGIPNWDEIEKLIKEWQPDLVVVGLPLNMDGTEQDITQRAKKFANRISGRFGVKVLTQDERLTTADAKARLFELGGYKALTKGQVDAVSAVLIIESYFENQYD.

The protein belongs to the YqgF nuclease family.

The protein resides in the cytoplasm. Its function is as follows. Could be a nuclease involved in processing of the 5'-end of pre-16S rRNA. The sequence is that of Putative pre-16S rRNA nuclease from Shewanella denitrificans (strain OS217 / ATCC BAA-1090 / DSM 15013).